Here is a 460-residue protein sequence, read N- to C-terminus: MLLPEITLTLTALLSQFFAVMLQGKNRIVANITILLTILTIFIILKYSYSESVLYLDYVMFTTNANIANYKAIILIFTIISMIIYRDYSVRSGEPLKFEFITLILLSTVGIFVAISAQNFLLLFCAMELTALTSYILAGFKLSDIKSSEGALKYFILGSLVSCLSLFGISFIYGFGGSLQFSDIFYKLNDSSSVNLGLVIGVVLFLSSIFFKLSSAPLHFWAPDVYEGSPIASVTYFTAASKIGAVAILLNIENLIIKNYHPISYNLIKIIALLSMIFGALGAIRQTSLKRLMAYSTILNIGYVLIGVLLRTEDGNKAAMLYMLIYAAASIGFFTCLIMLLGNQTDKANFESIQGIAENHKAIAAAICIIMFSMIGIPPLAGFLGKYYLFYQAITQEEFLLAYFGIFTSVIAAFYYLKIIKTMYFAEKPNPTKIPISYGLLLINFVVIGFLLFGSFIISS.

The next 13 membrane-spanning stretches (helical) occupy residues 2 to 22, 28 to 48, 65 to 85, 104 to 124, 155 to 175, 196 to 216, 230 to 250, 263 to 283, 292 to 312, 321 to 341, 363 to 383, 400 to 420, and 438 to 458; these read LLPEITLTLTALLSQFFAVML, IVANITILLTILTIFIILKYS, ANIANYKAIILIFTIISMIIY, ILLSTVGIFVAISAQNFLLLF, FILGSLVSCLSLFGISFIYGF, LGLVIGVVLFLSSIFFKLSSA, PIASVTYFTAASKIGAVAILL, ISYNLIKIIALLSMIFGALGA, LMAYSTILNIGYVLIGVLLRT, LYMLIYAAASIGFFTCLIMLL, IAAAICIIMFSMIGIPPLAGF, LLAYFGIFTSVIAAFYYLKII, and YGLLLINFVVIGFLLFGSFII.

It belongs to the complex I subunit 2 family. As to quaternary structure, NDH-1 is composed of 14 different subunits. Subunits NuoA, H, J, K, L, M, N constitute the membrane sector of the complex.

It localises to the cell inner membrane. The catalysed reaction is a quinone + NADH + 5 H(+)(in) = a quinol + NAD(+) + 4 H(+)(out). Functionally, NDH-1 shuttles electrons from NADH, via FMN and iron-sulfur (Fe-S) centers, to quinones in the respiratory chain. The immediate electron acceptor for the enzyme in this species is believed to be ubiquinone. Couples the redox reaction to proton translocation (for every two electrons transferred, four hydrogen ions are translocated across the cytoplasmic membrane), and thus conserves the redox energy in a proton gradient. The protein is NADH-quinone oxidoreductase subunit N of Rickettsia bellii (strain RML369-C).